The following is a 499-amino-acid chain: L-asparagine permease (499 aa).

12 consecutive transmembrane segments (helical) span residues 34–54 (QVQMIAIGGAIGTGLFLGAGA), 58–78 (MAGPALALVYLICGLFSFFIL), 109–129 (VAGWMYFINWAMTGIVDITAV), 146–166 (VFALAALTIVGTMNMIGVKWF), 171–191 (FWFALIKVLAIVTFLVVGTVF), 219–239 (LLPALVLIQGVVFAFASIEMV), 264–284 (IGLFYVGSVVLLVMLLPWSAY), 298–318 (LGVPYIGSIMNIVVLTAALSS), 353–373 (YAGILATLVVYVVGVFLNYLV), 378–398 (FEIVLNFASLGIIASWAFIIV), 422–442 (APFTSWLTLLFLLSVLVLMAF), and 448–468 (TYTIAALPIIGILLVIGWFGV).

This sequence belongs to the amino acid-polyamine-organocation (APC) superfamily. Amino acid transporter (AAT) (TC 2.A.3.1) family.

Its subcellular location is the cell inner membrane. This is L-asparagine permease (ansP) from Escherichia coli (strain K12).